A 291-amino-acid polypeptide reads, in one-letter code: Homoserine kinase (291 aa).

Residue 79-89 (PLARGLGSSSA) coordinates ATP.

The protein belongs to the GHMP kinase family. Homoserine kinase subfamily.

It is found in the cytoplasm. The enzyme catalyses L-homoserine + ATP = O-phospho-L-homoserine + ADP + H(+). Its pathway is amino-acid biosynthesis; L-threonine biosynthesis; L-threonine from L-aspartate: step 4/5. In terms of biological role, catalyzes the ATP-dependent phosphorylation of L-homoserine to L-homoserine phosphate. This chain is Homoserine kinase, found in Leuconostoc citreum (strain KM20).